A 295-amino-acid chain; its full sequence is Ethanolamine ammonia-lyase small subunit (295 aa).

Adenosylcob(III)alamin-binding residues include valine 207, glutamate 228, and cysteine 258.

The protein belongs to the EutC family. The basic unit is a heterodimer which dimerizes to form tetramers. The heterotetramers trimerize; 6 large subunits form a core ring with 6 small subunits projecting outwards. The cofactor is adenosylcob(III)alamin.

It localises to the bacterial microcompartment. It carries out the reaction ethanolamine = acetaldehyde + NH4(+). It participates in amine and polyamine degradation; ethanolamine degradation. Functionally, catalyzes the deamination of various vicinal amino-alcohols to oxo compounds. Allows this organism to utilize ethanolamine as the sole source of nitrogen and carbon in the presence of external vitamin B12. The polypeptide is Ethanolamine ammonia-lyase small subunit (Escherichia coli (strain SE11)).